Reading from the N-terminus, the 466-residue chain is Fumarate hydratase class II (466 aa).

Substrate is bound by residues 100 to 102 (SGT), R128, 131 to 134 (HPND), 141 to 143 (SSN), and T189. Positions 122–137 (GERGERRKVHPNDDVN) are enriched in basic and acidic residues. A disordered region spans residues 122–143 (GERGERRKVHPNDDVNKGQSSN). The active-site Proton donor/acceptor is the H190. S320 is an active-site residue. Residues S321 and 326-328 (KVN) contribute to the substrate site.

The protein belongs to the class-II fumarase/aspartase family. Fumarase subfamily. In terms of assembly, homotetramer.

Its subcellular location is the cytoplasm. The catalysed reaction is (S)-malate = fumarate + H2O. It participates in carbohydrate metabolism; tricarboxylic acid cycle; (S)-malate from fumarate: step 1/1. Functionally, involved in the TCA cycle. Catalyzes the stereospecific interconversion of fumarate to L-malate. The protein is Fumarate hydratase class II of Myxococcus xanthus (strain DK1622).